Consider the following 208-residue polypeptide: Outer-membrane lipoprotein carrier protein (208 aa).

Positions 1–25 (MKKRFSAKLFSALVLSISFFSAANA) are cleaved as a signal peptide.

The protein belongs to the LolA family. As to quaternary structure, monomer.

Its subcellular location is the periplasm. Its function is as follows. Participates in the translocation of lipoproteins from the inner membrane to the outer membrane. Only forms a complex with a lipoprotein if the residue after the N-terminal Cys is not an aspartate (The Asp acts as a targeting signal to indicate that the lipoprotein should stay in the inner membrane). The protein is Outer-membrane lipoprotein carrier protein of Vibrio parahaemolyticus serotype O3:K6 (strain RIMD 2210633).